A 131-amino-acid polypeptide reads, in one-letter code: uncharacterized protein (131 aa).

The tract at residues 112–131 is disordered; sequence LTDNPGAVRKSQKSLIPPYN.

This is an uncharacterized protein from Fowl adenovirus A serotype 1 (strain CELO / Phelps) (FAdV-1).